Consider the following 1571-residue polypeptide: Pentafunctional AROM polypeptide (1571 aa).

The 3-dehydroquinate synthase stretch occupies residues Met-1–Asn-384. Residues Asp-44 to Asn-46, Glu-81 to Lys-84, Gly-114 to Val-116, and Asp-119 contribute to the NAD(+) site. Arg-130 contributes to the 7-phospho-2-dehydro-3-deoxy-D-arabino-heptonate binding site. Thr-139 to Thr-140 contributes to the NAD(+) binding site. 2 residues coordinate 7-phospho-2-dehydro-3-deoxy-D-arabino-heptonate: Asp-146 and Lys-152. NAD(+) is bound at residue Lys-161. Asn-162 is a binding site for 7-phospho-2-dehydro-3-deoxy-D-arabino-heptonate. NAD(+) is bound by residues Phe-179 to Thr-182 and Asn-190. Glu-194 provides a ligand contact to Zn(2+). Residues Glu-194–Lys-197 and Lys-250 each bind 7-phospho-2-dehydro-3-deoxy-D-arabino-heptonate. The Proton acceptor; for 3-dehydroquinate synthase activity role is filled by Glu-260. 7-phospho-2-dehydro-3-deoxy-D-arabino-heptonate contacts are provided by residues Arg-264–Asn-268 and His-271. A Zn(2+)-binding site is contributed by His-271. Residue His-275 is the Proton acceptor; for 3-dehydroquinate synthase activity of the active site. Residues His-287 and Lys-356 each coordinate 7-phospho-2-dehydro-3-deoxy-D-arabino-heptonate. His-287 lines the Zn(2+) pocket. An EPSP synthase region spans residues Val-397 to Val-843. Cys-825 functions as the For EPSP synthase activity in the catalytic mechanism. Residues Ala-866–Ser-1057 are shikimate kinase. Residue Gly-872–Thr-879 participates in ATP binding. A 3-dehydroquinase region spans residues Leu-1058–Asp-1278. Residue His-1181 is the Proton acceptor; for 3-dehydroquinate dehydratase activity of the active site. Lys-1209 acts as the Schiff-base intermediate with substrate; for 3-dehydroquinate dehydratase activity in catalysis. The tract at residues Ala-1291–Ile-1571 is shikimate dehydrogenase.

In the N-terminal section; belongs to the sugar phosphate cyclases superfamily. Dehydroquinate synthase family. This sequence in the 2nd section; belongs to the EPSP synthase family. The protein in the 3rd section; belongs to the shikimate kinase family. It in the 4th section; belongs to the type-I 3-dehydroquinase family. In the C-terminal section; belongs to the shikimate dehydrogenase family. In terms of assembly, homodimer. Zn(2+) serves as cofactor.

The protein resides in the cytoplasm. It catalyses the reaction 7-phospho-2-dehydro-3-deoxy-D-arabino-heptonate = 3-dehydroquinate + phosphate. The enzyme catalyses 3-dehydroquinate = 3-dehydroshikimate + H2O. It carries out the reaction shikimate + NADP(+) = 3-dehydroshikimate + NADPH + H(+). The catalysed reaction is shikimate + ATP = 3-phosphoshikimate + ADP + H(+). It catalyses the reaction 3-phosphoshikimate + phosphoenolpyruvate = 5-O-(1-carboxyvinyl)-3-phosphoshikimate + phosphate. It participates in metabolic intermediate biosynthesis; chorismate biosynthesis; chorismate from D-erythrose 4-phosphate and phosphoenolpyruvate: step 2/7. It functions in the pathway metabolic intermediate biosynthesis; chorismate biosynthesis; chorismate from D-erythrose 4-phosphate and phosphoenolpyruvate: step 3/7. The protein operates within metabolic intermediate biosynthesis; chorismate biosynthesis; chorismate from D-erythrose 4-phosphate and phosphoenolpyruvate: step 4/7. Its pathway is metabolic intermediate biosynthesis; chorismate biosynthesis; chorismate from D-erythrose 4-phosphate and phosphoenolpyruvate: step 5/7. It participates in metabolic intermediate biosynthesis; chorismate biosynthesis; chorismate from D-erythrose 4-phosphate and phosphoenolpyruvate: step 6/7. In terms of biological role, the AROM polypeptide catalyzes 5 consecutive enzymatic reactions in prechorismate polyaromatic amino acid biosynthesis. The sequence is that of Pentafunctional AROM polypeptide from Arthroderma otae (strain ATCC MYA-4605 / CBS 113480) (Microsporum canis).